The sequence spans 50 residues: Protein PsbN (50 aa).

A helical transmembrane segment spans residues 14–34 (VAVTILAVLLALTGFGLWTAF).

It belongs to the PsbN family.

The protein resides in the cellular thylakoid membrane. Its function is as follows. May play a role in photosystem I and II biogenesis. This chain is Protein PsbN, found in Prochlorococcus marinus subsp. pastoris (strain CCMP1986 / NIES-2087 / MED4).